The chain runs to 701 residues: Ribosomal RNA large subunit methyltransferase K/L (701 aa).

In terms of domain architecture, THUMP spans 43-154 (LLYQSLMWSR…KETAHISLDL (112 aa)).

This sequence belongs to the methyltransferase superfamily. RlmKL family.

Its subcellular location is the cytoplasm. The catalysed reaction is guanosine(2445) in 23S rRNA + S-adenosyl-L-methionine = N(2)-methylguanosine(2445) in 23S rRNA + S-adenosyl-L-homocysteine + H(+). It carries out the reaction guanosine(2069) in 23S rRNA + S-adenosyl-L-methionine = N(2)-methylguanosine(2069) in 23S rRNA + S-adenosyl-L-homocysteine + H(+). Specifically methylates the guanine in position 2445 (m2G2445) and the guanine in position 2069 (m7G2069) of 23S rRNA. This is Ribosomal RNA large subunit methyltransferase K/L from Klebsiella pneumoniae subsp. pneumoniae (strain ATCC 700721 / MGH 78578).